A 100-amino-acid polypeptide reads, in one-letter code: uncharacterized protein (100 aa).

This is an uncharacterized protein from Bacillus subtilis (strain 168).